The chain runs to 163 residues: Neurotrophin-3 (163 aa).

The N-terminal stretch at 1–3 (IQS) is a signal peptide. A propeptide spanning residues 4–119 (SSMDQGILTE…VLNRTSRRKR (116 aa)) is cleaved from the precursor. A disordered region spans residues 36–61 (QTARTKDGMQTTVKKTEAEADARASQ). Residues 49-61 (KKTEAEADARASQ) show a composition bias toward basic and acidic residues. The N-linked (GlcNAc...) asparagine glycan is linked to asparagine 112.

It belongs to the NGF-beta family.

It localises to the secreted. Its function is as follows. Seems to promote the survival of visceral and proprioceptive sensory neurons. In Boa constrictor (Boa), this protein is Neurotrophin-3 (NTF3).